We begin with the raw amino-acid sequence, 280 residues long: UPF0758 protein Atu1607 (280 aa).

Residues 1–22 are disordered; sequence MAKRPALPSADLSPTSGFEAGE. The 123-residue stretch at 158–280 folds into the MPN domain; that stretch reads VLGSWSSVID…HASFKGLRLI (123 aa). Zn(2+)-binding residues include H229, H231, and D242. Positions 229-242 match the JAMM motif motif; sequence HNHPSGDPTPSRAD.

The protein belongs to the UPF0758 family.

This is UPF0758 protein Atu1607 from Agrobacterium fabrum (strain C58 / ATCC 33970) (Agrobacterium tumefaciens (strain C58)).